Reading from the N-terminus, the 357-residue chain is Histidinol-phosphate aminotransferase (357 aa).

N6-(pyridoxal phosphate)lysine is present on Lys-212.

Belongs to the class-II pyridoxal-phosphate-dependent aminotransferase family. Histidinol-phosphate aminotransferase subfamily. Homodimer. The cofactor is pyridoxal 5'-phosphate.

The enzyme catalyses L-histidinol phosphate + 2-oxoglutarate = 3-(imidazol-4-yl)-2-oxopropyl phosphate + L-glutamate. It participates in amino-acid biosynthesis; L-histidine biosynthesis; L-histidine from 5-phospho-alpha-D-ribose 1-diphosphate: step 7/9. The protein is Histidinol-phosphate aminotransferase of Pectobacterium atrosepticum (strain SCRI 1043 / ATCC BAA-672) (Erwinia carotovora subsp. atroseptica).